A 291-amino-acid polypeptide reads, in one-letter code: Transcription factor TYE7 (291 aa).

The interval 89-109 (FPTDQFFSNPSSYSHSPEVSS) is disordered. The span at 96–109 (SNPSSYSHSPEVSS) shows a compositional bias: low complexity. S104 carries the post-translational modification Phosphoserine. In terms of domain architecture, bHLH spans 180-265 (FQKQAHNKIE…EKAVDYILYL (86 aa)). The DNA site is built by H185, E189, and R193. The interval 221 to 245 (DSVKKQDEDGAETAATTPLPSAAAT) is disordered. Residues 233–245 (TAATTPLPSAAAT) show a composition bias toward low complexity. The residue at position 237 (T237) is a Phosphothreonine.

In terms of assembly, homodimer. Efficient DNA binding requires dimerization with another bHLH protein.

The protein resides in the nucleus. Its function is as follows. Transcriptional activator of glycolytic gene expression, such as enolase genes (ENO1 and ENO2), glyceraldehyde-3-phosphate dehydrogenase gene (TDH), phosphoglycerate kinase (PGK1), phosphoglycerate mutase (PGM1), pyruvate kinase (PYK1) and triosephosphate isomerase (TPI1) genes. Binds DNA on E-box motifs: 5'-CANNTG-3'. In response to adenylic nucleotide reduction, activates Ty1 mRNA transcription, possibly by controlling Ty1 antisense transcription. Acts as a cell cycle transcription factor. Its function may also be linked to sulfur metabolism and the cross-regulation between phosphate and sulfate metabolism. The chain is Transcription factor TYE7 from Saccharomyces cerevisiae (strain ATCC 204508 / S288c) (Baker's yeast).